The following is a 53-amino-acid chain: Beta-defensin C7 (53 aa).

3 disulfide bridges follow: C20–C49, C27–C42, and C32–C50.

The protein belongs to the beta-defensin family.

It is found in the secreted. Has bactericidal activity. In Bos taurus (Bovine), this protein is Beta-defensin C7.